A 138-amino-acid chain; its full sequence is Large ribosomal subunit protein bL19 (138 aa).

The protein belongs to the bacterial ribosomal protein bL19 family.

In terms of biological role, this protein is located at the 30S-50S ribosomal subunit interface and may play a role in the structure and function of the aminoacyl-tRNA binding site. This is Large ribosomal subunit protein bL19 from Rickettsia peacockii (strain Rustic).